The sequence spans 512 residues: Solute carrier family 40 member 2 (512 aa).

The interval Met-1–Ser-28 is disordered. Residues Gln-17–Pro-27 show a composition bias toward acidic residues. Helical transmembrane passes span Val-55 to Val-75, Leu-105 to Val-125, Phe-133 to Ser-153, Gly-187 to Val-207, Ile-214 to Val-234, Ile-310 to Leu-330, Tyr-343 to Tyr-363, Gly-376 to Val-396, Met-405 to Ile-425, Gly-442 to Val-462, and Phe-468 to Ile-488.

This sequence belongs to the ferroportin (FP) (TC 2.A.100) family. SLC40A subfamily.

It is found in the vacuole membrane. Vacuolar transporter that is involved in the transport of excess nickel into the vacuole under iron deficiency, increasing cellular tolerance to nickel under iron deficiency stress response. The polypeptide is Solute carrier family 40 member 2 (IREG2) (Arabidopsis thaliana (Mouse-ear cress)).